A 206-amino-acid polypeptide reads, in one-letter code: Large ribosomal subunit protein uL4 (206 aa).

The segment at 46 to 77 (GTRAQKDREQVKHSTKKPFKQKGTGRARAGMT) is disordered. Basic residues predominate over residues 58–70 (HSTKKPFKQKGTG).

The protein belongs to the universal ribosomal protein uL4 family. In terms of assembly, part of the 50S ribosomal subunit.

Its function is as follows. One of the primary rRNA binding proteins, this protein initially binds near the 5'-end of the 23S rRNA. It is important during the early stages of 50S assembly. It makes multiple contacts with different domains of the 23S rRNA in the assembled 50S subunit and ribosome. Forms part of the polypeptide exit tunnel. This Albidiferax ferrireducens (strain ATCC BAA-621 / DSM 15236 / T118) (Rhodoferax ferrireducens) protein is Large ribosomal subunit protein uL4.